A 264-amino-acid chain; its full sequence is uncharacterized protein (264 aa).

Residues 9 to 29 (LVISILSLIATLSISFNIYFI) traverse the membrane as a helical segment.

It is found in the membrane. This is an uncharacterized protein from Ureaplasma parvum serovar 3 (strain ATCC 700970).